A 415-amino-acid chain; its full sequence is 3-isopropylmalate dehydratase large subunit (415 aa).

Residues C295, C353, and C356 each coordinate [4Fe-4S] cluster.

This sequence belongs to the aconitase/IPM isomerase family. LeuC type 2 subfamily. In terms of assembly, heterodimer of LeuC and LeuD. [4Fe-4S] cluster is required as a cofactor.

The enzyme catalyses (2R,3S)-3-isopropylmalate = (2S)-2-isopropylmalate. The protein operates within amino-acid biosynthesis; L-leucine biosynthesis; L-leucine from 3-methyl-2-oxobutanoate: step 2/4. Functionally, catalyzes the isomerization between 2-isopropylmalate and 3-isopropylmalate, via the formation of 2-isopropylmaleate. The sequence is that of 3-isopropylmalate dehydratase large subunit from Pyrobaculum arsenaticum (strain DSM 13514 / JCM 11321 / PZ6).